A 149-amino-acid chain; its full sequence is Large ribosomal subunit protein uL22c (149 aa).

This sequence belongs to the universal ribosomal protein uL22 family. As to quaternary structure, part of the 50S ribosomal subunit.

It is found in the plastid. Its subcellular location is the chloroplast. In terms of biological role, this protein binds specifically to 23S rRNA. The globular domain of the protein is located near the polypeptide exit tunnel on the outside of the subunit, while an extended beta-hairpin is found that lines the wall of the exit tunnel in the center of the 70S ribosome. The sequence is that of Large ribosomal subunit protein uL22c (rpl22-A) from Pelargonium hortorum (Common geranium).